Reading from the N-terminus, the 645-residue chain is 1,4-alpha-glucan branching enzyme GlgB (645 aa).

Asp-309 acts as the Nucleophile in catalysis. Glu-352 (proton donor) is an active-site residue. Positions 621-645 are disordered; that stretch reads MRKGSKKQDGKKAELRSNATSRRKR. Residues 626–635 show a composition bias toward basic and acidic residues; that stretch reads KKQDGKKAEL.

This sequence belongs to the glycosyl hydrolase 13 family. GlgB subfamily. Monomer.

The catalysed reaction is Transfers a segment of a (1-&gt;4)-alpha-D-glucan chain to a primary hydroxy group in a similar glucan chain.. It participates in glycan biosynthesis; glycogen biosynthesis. Functionally, catalyzes the formation of the alpha-1,6-glucosidic linkages in glycogen by scission of a 1,4-alpha-linked oligosaccharide from growing alpha-1,4-glucan chains and the subsequent attachment of the oligosaccharide to the alpha-1,6 position. The chain is 1,4-alpha-glucan branching enzyme GlgB from Bacillus cytotoxicus (strain DSM 22905 / CIP 110041 / 391-98 / NVH 391-98).